Here is a 378-residue protein sequence, read N- to C-terminus: Protein FAM170B (378 aa).

Disordered regions lie at residues 1-56 (MKHH…LPDD), 244-265 (TRDQKQDQQPVEEEQSLSDSSE), and 277-378 (QQQP…QQGK). Composition is skewed to low complexity over residues 277-339 (QQQP…QPLQ) and 349-378 (PQKQQQRQQQRQQQPPRQQQKQQPLQQQGK).

It belongs to the FAM170 family. As to quaternary structure, interacts with GOPC. In terms of tissue distribution, exclusively expressed in adult testis (at protein level). Expression first started at postnatal week 3 in round spermatids, elongated spermatids and mature sperm.

The protein resides in the cytoplasmic vesicle. It is found in the secretory vesicle. The protein localises to the acrosome. It localises to the acrosome outer membrane. Functionally, plays a role in fertilization through the acrosome reaction. In Mus musculus (Mouse), this protein is Protein FAM170B.